A 147-amino-acid polypeptide reads, in one-letter code: Hemoglobin subunit gamma (147 aa).

A Globin domain is found at 3-147 (DFTAEEKAAI…VASAVARKYH (145 aa)). 2 residues coordinate heme b: His-64 and His-93.

It belongs to the globin family. As to quaternary structure, heterotetramer of two alpha chains and two gamma chains in fetal hemoglobin (Hb F). As to expression, red blood cells.

Its function is as follows. Gamma chains make up the fetal hemoglobin F, in combination with alpha chains. The protein is Hemoglobin subunit gamma (HBG) of Trichechus manatus (Caribbean manatee).